The following is a 157-amino-acid chain: uncharacterized protein (157 aa).

The region spanning 9-147 (LLINYKTLDE…DFYVWHPEVN (139 aa)) is the N-acetyltransferase domain.

This is an uncharacterized protein from Bacillus cereus (strain 03BB102).